Reading from the N-terminus, the 205-residue chain is Peptidyl-tRNA hydrolase (205 aa).

A tRNA-binding site is contributed by Y18. Catalysis depends on H23, which acts as the Proton acceptor. Residues Y69, N71, and N117 each contribute to the tRNA site.

This sequence belongs to the PTH family. Monomer.

It localises to the cytoplasm. It carries out the reaction an N-acyl-L-alpha-aminoacyl-tRNA + H2O = an N-acyl-L-amino acid + a tRNA + H(+). In terms of biological role, hydrolyzes ribosome-free peptidyl-tRNAs (with 1 or more amino acids incorporated), which drop off the ribosome during protein synthesis, or as a result of ribosome stalling. Its function is as follows. Catalyzes the release of premature peptidyl moieties from peptidyl-tRNA molecules trapped in stalled 50S ribosomal subunits, and thus maintains levels of free tRNAs and 50S ribosomes. The protein is Peptidyl-tRNA hydrolase of Synechococcus sp. (strain CC9605).